The following is a 154-amino-acid chain: Myoglobin (154 aa).

A Globin domain is found at 2-148; that stretch reads GLSEAEWQLV…FRKDIAAKYK (147 aa). S4 carries the phosphoserine modification. H65 contacts nitrite. H65 lines the O2 pocket. Position 68 is a phosphothreonine (T68). H94 serves as a coordination point for heme b.

The protein belongs to the globin family. In terms of assembly, monomeric.

The protein resides in the cytoplasm. It localises to the sarcoplasm. The enzyme catalyses Fe(III)-heme b-[protein] + nitric oxide + H2O = Fe(II)-heme b-[protein] + nitrite + 2 H(+). It carries out the reaction H2O2 + AH2 = A + 2 H2O. Functionally, monomeric heme protein which primary function is to store oxygen and facilitate its diffusion within muscle tissues. Reversibly binds oxygen through a pentacoordinated heme iron and enables its timely and efficient release as needed during periods of heightened demand. Depending on the oxidative conditions of tissues and cells, and in addition to its ability to bind oxygen, it also has a nitrite reductase activity whereby it regulates the production of bioactive nitric oxide. Under stress conditions, like hypoxia and anoxia, it also protects cells against reactive oxygen species thanks to its pseudoperoxidase activity. This is Myoglobin (MB) from Indopacetus pacificus (Longman's beaked whale).